We begin with the raw amino-acid sequence, 300 residues long: MIQSRQLEAFRPVMLTGGMTSAANLVRITQPAISRLIRDLEEEIGISLFERTGNRLRPTREAGILFKEVSRHFNGIQHIDKVAAELKKSHMGSLRVACYTAPALSFMSGVIQTFIADRPDVSVYLDTVPSQTVLELVSLQHYDLGISILAGDYPGLTTEPVPSFRAVCLLPPGHRLEDKETVHATDLEGESLICLSPVSLLRMQTDAALDSCGVHCNRRIESSLALNLCDLVSRGMGVGIVDPFTADYYSANPVIQRSFDPVVPYHFAIVLPTDSPPPRLVSEFRAALLDALKALPYETI.

An HTH lysR-type domain is found at 1–59 (MIQSRQLEAFRPVMLTGGMTSAANLVRITQPAISRLIRDLEEEIGISLFERTGNRLRPT). A DNA-binding region (H-T-H motif) is located at residues 19–38 (MTSAANLVRITQPAISRLIR).

The protein belongs to the LysR transcriptional regulatory family.

In terms of biological role, positive regulatory protein for the noc operon involved in nopaline catabolism and uptake. This is Regulatory protein NocR (nocR) from Agrobacterium tumefaciens (strain T37).